A 145-amino-acid polypeptide reads, in one-letter code: D-aminoacyl-tRNA deacylase (145 aa).

A Gly-cisPro motif, important for rejection of L-amino acids motif is present at residues 137–138 (GP).

It belongs to the DTD family. In terms of assembly, homodimer.

The protein localises to the cytoplasm. It carries out the reaction glycyl-tRNA(Ala) + H2O = tRNA(Ala) + glycine + H(+). The enzyme catalyses a D-aminoacyl-tRNA + H2O = a tRNA + a D-alpha-amino acid + H(+). An aminoacyl-tRNA editing enzyme that deacylates mischarged D-aminoacyl-tRNAs. Also deacylates mischarged glycyl-tRNA(Ala), protecting cells against glycine mischarging by AlaRS. Acts via tRNA-based rather than protein-based catalysis; rejects L-amino acids rather than detecting D-amino acids in the active site. By recycling D-aminoacyl-tRNA to D-amino acids and free tRNA molecules, this enzyme counteracts the toxicity associated with the formation of D-aminoacyl-tRNA entities in vivo and helps enforce protein L-homochirality. This is D-aminoacyl-tRNA deacylase from Escherichia coli O139:H28 (strain E24377A / ETEC).